A 144-amino-acid polypeptide reads, in one-letter code: MESPLGSDLARLVRIWRALIDHRLKPLELTQTHWVTLHNIHQLPPDQSQIQLAKAIGIEQPSLVRTLDQLEEKGLISRQTCASDRRAKRIKLTEKAEPLISEMEAVINKTCAEILHGISAEELEQLITLIAKLEHNIIELQAKG.

The region spanning 2 to 135 is the HTH marR-type domain; that stretch reads ESPLGSDLAR…LITLIAKLEH (134 aa). A DNA-binding region (H-T-H motif) is located at residues 49-72; sequence QIQLAKAIGIEQPSLVRTLDQLEE.

It belongs to the SlyA family. In terms of assembly, homodimer.

Transcription regulator that can specifically activate or repress expression of target genes. In Shigella boydii serotype 18 (strain CDC 3083-94 / BS512), this protein is Transcriptional regulator SlyA.